A 152-amino-acid chain; its full sequence is Transcriptional regulator MraZ (152 aa).

SpoVT-AbrB domains are found at residues 5 to 52 (ATLV…PLPE) and 81 to 124 (ASEC…DEQT).

It belongs to the MraZ family. In terms of assembly, forms oligomers.

It localises to the cytoplasm. It is found in the nucleoid. Functionally, negatively regulates its own expression and that of the subsequent genes in the proximal part of the division and cell wall (dcw) gene cluster. Acts by binding directly to DNA. May also regulate the expression of genes outside the dcw cluster. This chain is Transcriptional regulator MraZ, found in Pectobacterium carotovorum subsp. carotovorum (strain PC1).